A 752-amino-acid polypeptide reads, in one-letter code: Microtubule-associated protein tau (752 aa).

The segment at 1–567 (MAEPRQEFDT…PVPMPDLKNV (567 aa)) is disordered. The residue at position 2 (alanine 2) is an N-acetylalanine. The residue at position 18 (tyrosine 18) is a Phosphotyrosine. Lysine 33 is covalently cross-linked (Glycyl lysine isopeptide (Lys-Gly) (interchain with G-Cter in ubiquitin)). A phosphoserine mark is found at serine 35 and serine 50. Over residues 50–60 (SETSDAKSTPT) the composition is skewed to polar residues. Phosphothreonine is present on residues threonine 58, threonine 60, and threonine 100. Polar residues predominate over residues 142 to 151 (SDWTHQQVPS). The segment covering 173–182 (RPEDVERSHP) has biased composition (basic and acidic residues). A phosphoserine mark is found at serine 191 and serine 204. The segment covering 192-204 (PQKEAWGKDRLGS) has biased composition (basic and acidic residues). Over residues 205–218 (EEEVDEDITMDESS) the composition is skewed to acidic residues. Over residues 219–229 (QESPPSQASLA) the composition is skewed to low complexity. Residues 233–252 (ATPQARSVSASGVSGETTSI) are compositionally biased toward polar residues. Composition is skewed to basic and acidic residues over residues 289-313 (EEGH…KEQD) and 374-385 (SKDRTGNDEKKA). Composition is skewed to polar residues over residues 387 to 400 (TSTP…SNRP) and 432 to 446 (KYVS…SPGT). Threonine 464 bears the Phosphothreonine mark. At arginine 466 the chain carries Omega-N-methylarginine. Lysine 474 carries the N6,N6-dimethyllysine; alternate modification. N6-acetyllysine; alternate is present on lysine 474. Threonine 480, threonine 486, and threonine 487 each carry phosphothreonine. Serine 489 carries the post-translational modification Phosphoserine. Threonine 492 carries the phosphothreonine modification. Residues serine 496, serine 502, and serine 506 each carry the phosphoserine modification. The segment covering 498-525 (EPPKSGERSGYSSPGSPGTPGSRSRTPS) has biased composition (low complexity). Tyrosine 508 bears the Phosphotyrosine mark. Phosphoserine is present on residues serine 509 and serine 510. Serine 513 carries the post-translational modification Phosphoserine; by CK1, PDPK1 and TTBK1. A phosphothreonine mark is found at threonine 516 and threonine 523. The residue at position 525 (serine 525) is a Phosphoserine. Residue threonine 528 is modified to Phosphothreonine. Position 536 is an N6-acetyllysine (lysine 536). At threonine 542 the chain carries Phosphothreonine. Phosphoserine occurs at positions 546 and 548. Tau/MAP repeat units lie at residues 555-585 (QTAP…GGGK), 586-616 (VQII…GGGS), 617-647 (VHIV…GGGQ), and 648-679 (VEVK…GGGN). Residue lysine 565 forms a Glycyl lysine isopeptide (Lys-Gly) (interchain with G-Cter in ubiquitin) linkage. Lysine 570 is subject to N6-acetyllysine; alternate. Lysine 570 carries the N6-methyllysine; alternate modification. Lysine 570 is covalently cross-linked (Glycyl lysine isopeptide (Lys-Gly) (interchain with G-Cter in ubiquitin); alternate). Serine 573 bears the Phosphoserine mark. Lysine 578 is covalently cross-linked (Glycyl lysine isopeptide (Lys-Gly) (interchain with G-Cter in ubiquitin)). The residue at position 592 (lysine 592) is an N6-acetyllysine; alternate. Lysine 592 participates in a covalent cross-link: Glycyl lysine isopeptide (Lys-Gly) (interchain with G-Cter in ubiquitin); alternate. Phosphoserine occurs at positions 596 and 600. Position 601 is an N6-acetyllysine (lysine 601). An intrachain disulfide couples cysteine 602 to cysteine 633. A Phosphoserine modification is found at serine 604. The residue at position 609 (lysine 609) is an N6-acetyllysine; alternate. Lysine 609 is covalently cross-linked (Glycyl lysine isopeptide (Lys-Gly) (interchain with G-Cter in ubiquitin); alternate). Serine 616 bears the Phosphoserine mark. Lysine 622 bears the N6,N6-dimethyllysine; alternate mark. Residues lysine 622, lysine 628, and lysine 632 each carry the N6-acetyllysine; alternate modification. Glycyl lysine isopeptide (Lys-Gly) (interchain with G-Cter in ubiquitin); alternate cross-links involve residues lysine 622, lysine 628, and lysine 632. At serine 635 the chain carries Phosphoserine. Lysine 642, lysine 654, and lysine 658 each carry N6-acetyllysine; alternate. Glycyl lysine isopeptide (Lys-Gly) (interchain with G-Cter in ubiquitin); alternate cross-links involve residues lysine 642, lysine 654, and lysine 658. At arginine 660 the chain carries Omega-N-methylarginine. A Phosphoserine modification is found at serine 663. Residue lysine 664 forms a Glycyl lysine isopeptide (Lys-Gly) (interchain with G-Cter in ubiquitin) linkage. Residue serine 667 is modified to Phosphoserine. An N6-acetyllysine; alternate modification is found at lysine 680. A Glycyl lysine isopeptide (Lys-Gly) (interchain with G-Cter in ubiquitin); alternate cross-link involves residue lysine 680. A Glycyl lysine isopeptide (Lys-Gly) (interchain with G-Cter in ubiquitin) cross-link involves residue lysine 686. Lysine 696 is modified (N6-acetyllysine; alternate). A Glycyl lysine isopeptide (Lys-Gly) (interchain with G-Cter in ubiquitin); alternate cross-link involves residue lysine 696. A Phosphotyrosine modification is found at tyrosine 705. Serine 707 bears the Phosphoserine; by CK1 and PDPK1 mark. Serine 711 carries the phosphoserine modification. Phosphothreonine is present on threonine 714. Position 715 is a phosphoserine; by CK1 and PDPK1 (serine 715). Phosphoserine is present on residues serine 720, serine 727, and serine 733. Residue threonine 738 is modified to Phosphothreonine.

As to quaternary structure, interacts with MARK1, MARK2, MARK3 and MARK4. Interacts with SQSTM1 when polyubiquitinated. Interacts with PSMC2 through SQSTM1. Interacts with FKBP4. Binds to CSNK1D. Interacts with SGK1. Interacts with EPM2A; the interaction dephosphorylates MAPT at Ser-388. Interacts with PIN1. Interacts with LRRK2. Interacts with LRP1, leading to endocytosis; this interaction is reduced in the presence of LRPAP1/RAP. In terms of processing, polyubiquitinated. Requires functional TRAF6 and may provoke SQSTM1-dependent degradation by the proteasome. Phosphorylated at various serine and threonine residues in S-P or T-P motifs by proline-directed protein kinases (PDPK1, CDK1, CDK5, GSK3, MAPK) (a few sites per protein in interphase, more in mitosis), and at serine residues in K-X-G-S motifs by MAP/microtubule affinity-regulating kinase (MARK1, MARK2, MARK3, MARK4), causing detachment from microtubules, and their disassembly. Fetal Tau is much more phosphorylated than adult Tau. Phosphorylation at Ser-573 by BRSK1 and BRSK2 in neurons affects ability to bind microtubules and plays a role in neuron polarization. Phosphorylated by PHK. Dephosphorylation at several serine and threonine residues by the serine/threonine phosphatase PPP5C. Phosphorylation at Ser-204 by SGK1 mediates microtubule depolymerization and neurite formation in hippocampal neurons. Expressed in neurons. The larger forms (isoform tau-A and isoform tau-B) are preferentially expressed in the peripheral nervous system while the other are expressed in the central nervous system. Low amounts of the larger forms are also found in limited areas of the CNS.

It is found in the cytoplasm. The protein resides in the cytosol. Its subcellular location is the cell membrane. The protein localises to the cytoskeleton. It localises to the cell projection. It is found in the axon. The protein resides in the dendrite. Its subcellular location is the secreted. Functionally, promotes microtubule assembly and stability, and might be involved in the establishment and maintenance of neuronal polarity. The C-terminus binds axonal microtubules while the N-terminus binds neural plasma membrane components, suggesting that tau functions as a linker protein between both. Axonal polarity is predetermined by tau localization (in the neuronal cell) in the domain of the cell body defined by the centrosome. The short isoforms allow plasticity of the cytoskeleton whereas the longer isoforms may preferentially play a role in its stabilization. The protein is Microtubule-associated protein tau of Rattus norvegicus (Rat).